The primary structure comprises 90 residues: uncharacterized protein (90 aa).

The signal sequence occupies residues 1–20 (MEKLFVLVFALTLLAFSSEA). Residues 31-50 (QLLRSRRQDRPSKPGFPDEP) form a disordered region.

Its subcellular location is the secreted. This is an uncharacterized protein from Rattus norvegicus (Rat).